The chain runs to 254 residues: Serotonin N-acetyltransferase 1, chloroplastic (254 aa).

Residues 1-74 (MAPAASASAS…LRSGFLKSNN (74 aa)) constitute a chloroplast transit peptide. Positions 111–254 (IIFSSAGDVN…IKGMFWYPRF (144 aa)) constitute an N-acetyltransferase domain.

The protein belongs to the acetyltransferase family. Expressed in roots and shoots.

The protein resides in the plastid. It is found in the chloroplast. Its subcellular location is the nucleus. The enzyme catalyses serotonin + acetyl-CoA = N-acetylserotonin + CoA + H(+). It carries out the reaction tyramine + acetyl-CoA = N-acetyltyramine + CoA + H(+). It catalyses the reaction tryptamine + acetyl-CoA = N-acetyltryptamine + CoA + H(+). The catalysed reaction is 5-methoxytryptamine + acetyl-CoA = melatonin + CoA + H(+). It participates in aromatic compound metabolism; melatonin biosynthesis; melatonin from serotonin: step 1/2. Catalyzes the N-acetylation of serotonin into N-acetylserotonin, the penultimate step in the synthesis of melatonin. Catalyzes in vitro the N-acetylation of tryptamine to produce N-acetyltryptamine, 5-methoxytryptamine to produce melatonin and tyramine to produce N-acetyltyramine. The chain is Serotonin N-acetyltransferase 1, chloroplastic from Oryza sativa subsp. japonica (Rice).